We begin with the raw amino-acid sequence, 161 residues long: Allophycocyanin beta chain (161 aa).

N71 bears the N4-methylasparagine mark. (2R,3E)-phycocyanobilin is bound at residue C81.

Belongs to the phycobiliprotein family. In terms of assembly, heterodimer of an alpha and a beta chain. In terms of processing, contains one covalently linked phycocyanobilin chromophore.

It localises to the cellular thylakoid membrane. Functionally, light-harvesting photosynthetic bile pigment-protein from the phycobiliprotein complex. Allophycocyanin has a maximum absorption at approximately 650 nanometers. The sequence is that of Allophycocyanin beta chain (apcB) from Arthrospira platensis (Spirulina platensis).